The sequence spans 255 residues: Malonyl-[acyl-carrier protein] O-methyltransferase (255 aa).

The protein belongs to the methyltransferase superfamily.

The enzyme catalyses malonyl-[ACP] + S-adenosyl-L-methionine = malonyl-[ACP] methyl ester + S-adenosyl-L-homocysteine. It functions in the pathway cofactor biosynthesis; biotin biosynthesis. Functionally, converts the free carboxyl group of a malonyl-thioester to its methyl ester by transfer of a methyl group from S-adenosyl-L-methionine (SAM). It allows to synthesize pimeloyl-ACP via the fatty acid synthetic pathway. The protein is Malonyl-[acyl-carrier protein] O-methyltransferase of Acinetobacter baylyi (strain ATCC 33305 / BD413 / ADP1).